The sequence spans 185 residues: Putative manganese efflux pump MntP (185 aa).

The next 6 helical transmembrane spans lie at 4–24 (LLLSSLVIAVGLAMDSFSVSL), 43–63 (IFFGFFQFAMPLLGWGIGVPI), 67–87 (IDPFGYWIVVGLFFFIGGKMI), 107–127 (LLLAVATSIDALAVGISFALI), 131–151 (VLLPAVIIGVVAFLFSFFGVL), and 165–185 (QILGGVILVLIGIKFLIEYCL).

The protein belongs to the MntP (TC 9.B.29) family.

It is found in the cell membrane. Its function is as follows. Probably functions as a manganese efflux pump. The polypeptide is Putative manganese efflux pump MntP (Methanocorpusculum labreanum (strain ATCC 43576 / DSM 4855 / Z)).